A 313-amino-acid polypeptide reads, in one-letter code: Ribosomal RNA small subunit methyltransferase H (313 aa).

Residues 35 to 37 (GGH), Asp55, Phe80, Asp102, and Gln109 each bind S-adenosyl-L-methionine.

This sequence belongs to the methyltransferase superfamily. RsmH family.

It is found in the cytoplasm. It catalyses the reaction cytidine(1402) in 16S rRNA + S-adenosyl-L-methionine = N(4)-methylcytidine(1402) in 16S rRNA + S-adenosyl-L-homocysteine + H(+). Specifically methylates the N4 position of cytidine in position 1402 (C1402) of 16S rRNA. This Shewanella baltica (strain OS223) protein is Ribosomal RNA small subunit methyltransferase H.